A 1216-amino-acid chain; its full sequence is DNA-directed RNA polymerase subunit beta' (1216 aa).

Zn(2+) contacts are provided by C60, C62, C75, and C78. 3 residues coordinate Mg(2+): D450, D452, and D454. 4 residues coordinate Zn(2+): C819, C893, C900, and C903.

This sequence belongs to the RNA polymerase beta' chain family. As to quaternary structure, the RNAP catalytic core consists of 2 alpha, 1 beta, 1 beta' and 1 omega subunit. When a sigma factor is associated with the core the holoenzyme is formed, which can initiate transcription. The cofactor is Mg(2+). Zn(2+) is required as a cofactor.

It catalyses the reaction RNA(n) + a ribonucleoside 5'-triphosphate = RNA(n+1) + diphosphate. Its function is as follows. DNA-dependent RNA polymerase catalyzes the transcription of DNA into RNA using the four ribonucleoside triphosphates as substrates. This Streptococcus agalactiae serotype Ia (strain ATCC 27591 / A909 / CDC SS700) protein is DNA-directed RNA polymerase subunit beta'.